Here is a 428-residue protein sequence, read N- to C-terminus: Adenylosuccinate synthetase (428 aa).

GTP is bound by residues 12–18 (GDEGKGK) and 40–42 (GHT). Aspartate 13 serves as the catalytic Proton acceptor. Mg(2+) contacts are provided by aspartate 13 and glycine 40. IMP contacts are provided by residues 13 to 16 (DEGK), 38 to 41 (NAGH), threonine 128, arginine 142, glutamine 223, threonine 238, and arginine 302. Histidine 41 acts as the Proton donor in catalysis. 298-304 (TTTGRPR) contributes to the substrate binding site. Residues arginine 304, 330-332 (KLD), and 412-414 (SVG) each bind GTP.

It belongs to the adenylosuccinate synthetase family. As to quaternary structure, homodimer. The cofactor is Mg(2+).

It is found in the cytoplasm. It catalyses the reaction IMP + L-aspartate + GTP = N(6)-(1,2-dicarboxyethyl)-AMP + GDP + phosphate + 2 H(+). It participates in purine metabolism; AMP biosynthesis via de novo pathway; AMP from IMP: step 1/2. Its function is as follows. Plays an important role in the de novo pathway of purine nucleotide biosynthesis. Catalyzes the first committed step in the biosynthesis of AMP from IMP. This chain is Adenylosuccinate synthetase, found in Brevibacillus brevis (strain 47 / JCM 6285 / NBRC 100599).